We begin with the raw amino-acid sequence, 377 residues long: Succinyl-diaminopimelate desuccinylase (377 aa).

His-67 is a Zn(2+) binding site. Asp-69 is a catalytic residue. Asp-100 contributes to the Zn(2+) binding site. Glu-134 serves as the catalytic Proton acceptor. Residues Glu-135, Glu-163, and His-349 each contribute to the Zn(2+) site.

The protein belongs to the peptidase M20A family. DapE subfamily. In terms of assembly, homodimer. Zn(2+) is required as a cofactor. It depends on Co(2+) as a cofactor.

The catalysed reaction is N-succinyl-(2S,6S)-2,6-diaminopimelate + H2O = (2S,6S)-2,6-diaminopimelate + succinate. Its pathway is amino-acid biosynthesis; L-lysine biosynthesis via DAP pathway; LL-2,6-diaminopimelate from (S)-tetrahydrodipicolinate (succinylase route): step 3/3. Its function is as follows. Catalyzes the hydrolysis of N-succinyl-L,L-diaminopimelic acid (SDAP), forming succinate and LL-2,6-diaminopimelate (DAP), an intermediate involved in the bacterial biosynthesis of lysine and meso-diaminopimelic acid, an essential component of bacterial cell walls. The sequence is that of Succinyl-diaminopimelate desuccinylase from Actinobacillus pleuropneumoniae serotype 5b (strain L20).